The chain runs to 248 residues: Phosphoribosyl isomerase A (248 aa).

D14 functions as the Proton acceptor in the catalytic mechanism. The Proton donor role is filled by D133.

This sequence belongs to the HisA/HisF family.

The protein resides in the cytoplasm. The enzyme catalyses 1-(5-phospho-beta-D-ribosyl)-5-[(5-phospho-beta-D-ribosylamino)methylideneamino]imidazole-4-carboxamide = 5-[(5-phospho-1-deoxy-D-ribulos-1-ylimino)methylamino]-1-(5-phospho-beta-D-ribosyl)imidazole-4-carboxamide. It catalyses the reaction N-(5-phospho-beta-D-ribosyl)anthranilate = 1-(2-carboxyphenylamino)-1-deoxy-D-ribulose 5-phosphate. It participates in amino-acid biosynthesis; L-histidine biosynthesis; L-histidine from 5-phospho-alpha-D-ribose 1-diphosphate: step 4/9. The protein operates within amino-acid biosynthesis; L-tryptophan biosynthesis; L-tryptophan from chorismate: step 3/5. Functionally, involved in both the histidine and tryptophan biosynthetic pathways. The sequence is that of Phosphoribosyl isomerase A from Mycobacterium sp. (strain JLS).